A 205-amino-acid chain; its full sequence is 3-demethoxyubiquinol 3-hydroxylase (205 aa).

Fe cation is bound by residues Glu54, Glu84, His87, Glu136, Glu168, and His171.

Belongs to the COQ7 family. Fe cation is required as a cofactor.

The protein localises to the cell membrane. It catalyses the reaction a 5-methoxy-2-methyl-3-(all-trans-polyprenyl)benzene-1,4-diol + AH2 + O2 = a 3-demethylubiquinol + A + H2O. The protein operates within cofactor biosynthesis; ubiquinone biosynthesis. Catalyzes the hydroxylation of 2-nonaprenyl-3-methyl-6-methoxy-1,4-benzoquinol during ubiquinone biosynthesis. The polypeptide is 3-demethoxyubiquinol 3-hydroxylase (Acidovorax sp. (strain JS42)).